The primary structure comprises 715 residues: Staphylocoagulase (715 aa).

The signal sequence occupies residues 1-26; the sequence is MKKQIISLGALAVASSLFTWDNKADA. A compositionally biased stretch (basic and acidic residues) spans 306–327; it reads KYGESETKSPVVKEENKVEDPQ. 2 disordered regions span residues 306-348 and 430-470; these read KYGE…EETT and QGTE…FNKT. Over residues 431 to 443 the composition is skewed to polar residues; sequence GTESTLKGIQGES. 8 consecutive repeat copies span residues 495–521, 522–548, 549–575, 576–602, 603–629, 630–656, 657–683, and 684–710. Positions 495-710 are 8 X 27 AA tandem repeats of A-R-P-[RT]-[FQY]-[NK]-K-[PA]-S-[EK]-T-N-A-Y-N-V-T-T-[NH]-[QAG]-[DN]-G-[TQ]-[VA]-[ST]-Y-G; that stretch reads ARPRFNKPSE…THADGTATYG (216 aa). A disordered region spans residues 674–697; sequence THGNGQVSYGARPTYNKPSKTNAY.

The protein belongs to the staphylocoagulase family.

Its function is as follows. Staphylocoagulase is an extracellular protein which specifically forms a complex with human prothrombin. This complex named staphylothrombin can clot fibrinogen without any proteolytic cleavage of prothrombin. The sequence is that of Staphylocoagulase from Staphylococcus aureus.